Consider the following 610-residue polypeptide: Tyrosine-protein kinase Drl (610 aa).

A signal peptide spans 1-20 (MAPNLLTIGLLLTLIASGQA). The Extracellular segment spans residues 21-242 (HLNIFLNLHE…RENLVPPASG (222 aa)). The WIF domain occupies 24-155 (IFLNLHEVLR…NLIFKRKKIC (132 aa)). 3 N-linked (GlcNAc...) asparagine glycosylation sites follow: Asn63, Asn99, and Asn143. Residues 202–230 (QAPEKQRPVVTESPVGRGNSGGSKRDFDP) form a disordered region. The chain crosses the membrane as a helical span at residues 243-263 (LVTLIVGGILALVLVSTLILI). Residues 264–610 (AYCAKGPSKR…EFHTQITRYV (347 aa)) are Cytoplasmic-facing. The Protein kinase domain maps to 343–606 (VRLSCLVQEG…ICLSEFHTQI (264 aa)). ATP contacts are provided by residues 349–357 (VQEGNFGRI) and Lys371. The Proton acceptor role is filled by Asp468. Tyr498 carries the phosphotyrosine; by autocatalysis modification.

It belongs to the protein kinase superfamily. Tyr protein kinase family. In the embryonic abdominal hemisegment, expression is restricted to cell body, axon and growth cone of a cluster of 20 ventral nerve cord interneurons. During muscle growth and attachment events in the embryonic abdominal hemisegment, expression is in somatic muscle fibers 21-23 at 10-13 hours and 2 patches of approximately 15 neighboring epidermal cells (dorsal and ventral attachment sites) at 6-13 hours.

The protein localises to the cell membrane. The enzyme catalyses L-tyrosyl-[protein] + ATP = O-phospho-L-tyrosyl-[protein] + ADP + H(+). Probable coreceptor of Wnt proteins. Involved in neuronal pathway recognition and ventral muscle attachment site selection. Non-vital for development. May be part of a signal transduction cascade involved in learning and possibly memory. The chain is Tyrosine-protein kinase Drl (drl) from Drosophila melanogaster (Fruit fly).